The chain runs to 245 residues: MTFTASSSSCAITESPVVVALDYHERDKALAFVDKIDPRDCRLKVGKEMFTLFGPQLVRDLQQRGFDVFLDLKFHDIPNTTARAVAAAADLGVWMVNVHASGGARMMAAARDALAPFGKDAPLLIAVTVLTSMETSDLHDLGVTLSPAEHAERLARLTQQCGLDGVVCSAQEAVRFKQAFGAAFKLVTPGIRPAGSEAGDQRRIMTPEQALSAGVDYMVIGRPVTQSVDPAQTLKDINASLKREA.

Substrate-binding positions include Asp22, Lys44, 71-80 (DLKFHDIPNT), Thr131, Arg192, Gln201, Gly221, and Arg222. Lys73 serves as the catalytic Proton donor.

It belongs to the OMP decarboxylase family. Type 1 subfamily. In terms of assembly, homodimer.

The catalysed reaction is orotidine 5'-phosphate + H(+) = UMP + CO2. The protein operates within pyrimidine metabolism; UMP biosynthesis via de novo pathway; UMP from orotate: step 2/2. Its function is as follows. Catalyzes the decarboxylation of orotidine 5'-monophosphate (OMP) to uridine 5'-monophosphate (UMP). The polypeptide is Orotidine 5'-phosphate decarboxylase (Salmonella gallinarum (strain 287/91 / NCTC 13346)).